Here is a 450-residue protein sequence, read N- to C-terminus: Tubulin alpha chain (450 aa).

A GTP-binding site is contributed by Gln11. Position 40 is an N6-acetyllysine (Lys40). Residues Glu71, Ser140, Gly144, Thr145, Thr179, Asn206, and Asn228 each coordinate GTP. Glu71 lines the Mg(2+) pocket. Glu254 is a catalytic residue.

It belongs to the tubulin family. Dimer of alpha and beta chains. A typical microtubule is a hollow water-filled tube with an outer diameter of 25 nm and an inner diameter of 15 nM. Alpha-beta heterodimers associate head-to-tail to form protofilaments running lengthwise along the microtubule wall with the beta-tubulin subunit facing the microtubule plus end conferring a structural polarity. Microtubules usually have 13 protofilaments but different protofilament numbers can be found in some organisms and specialized cells. It depends on Mg(2+) as a cofactor. In terms of processing, undergoes a tyrosination/detyrosination cycle, the cyclic removal and re-addition of a C-terminal tyrosine residue by the enzymes tubulin tyrosine carboxypeptidase (TTCP) and tubulin tyrosine ligase (TTL), respectively. Post-translationally, acetylation of alpha chains at Lys-40 stabilizes microtubules and affects affinity and processivity of microtubule motors. This modification has a role in multiple cellular functions, ranging from cell motility, cell cycle progression or cell differentiation to intracellular trafficking and signaling.

It is found in the cytoplasm. Its subcellular location is the cytoskeleton. It carries out the reaction GTP + H2O = GDP + phosphate + H(+). Its function is as follows. Tubulin is the major constituent of microtubules, a cylinder consisting of laterally associated linear protofilaments composed of alpha- and beta-tubulin heterodimers. Microtubules grow by the addition of GTP-tubulin dimers to the microtubule end, where a stabilizing cap forms. Below the cap, tubulin dimers are in GDP-bound state, owing to GTPase activity of alpha-tubulin. This is Tubulin alpha chain from Haemonchus contortus (Barber pole worm).